We begin with the raw amino-acid sequence, 105 residues long: Small ribosomal subunit protein uS17 (105 aa).

The protein belongs to the universal ribosomal protein uS17 family. Part of the 30S ribosomal subunit.

In terms of biological role, one of the primary rRNA binding proteins, it binds specifically to the 5'-end of 16S ribosomal RNA. The chain is Small ribosomal subunit protein uS17 from Thermus thermophilus (strain ATCC BAA-163 / DSM 7039 / HB27).